The chain runs to 118 residues: Large ribosomal subunit protein uL18 (118 aa).

This sequence belongs to the universal ribosomal protein uL18 family. Part of the 50S ribosomal subunit; part of the 5S rRNA/L5/L18/L25 subcomplex. Contacts the 5S and 23S rRNAs.

In terms of biological role, this is one of the proteins that bind and probably mediate the attachment of the 5S RNA into the large ribosomal subunit, where it forms part of the central protuberance. This is Large ribosomal subunit protein uL18 from Rickettsia akari (strain Hartford).